A 423-amino-acid chain; its full sequence is 3-isopropylmalate dehydratase large subunit 1 (423 aa).

[4Fe-4S] cluster-binding residues include C302, C362, and C365.

Belongs to the aconitase/IPM isomerase family. LeuC type 2 subfamily. As to quaternary structure, heterodimer of LeuC and LeuD. The cofactor is [4Fe-4S] cluster.

The catalysed reaction is (2R,3S)-3-isopropylmalate = (2S)-2-isopropylmalate. It functions in the pathway amino-acid biosynthesis; L-leucine biosynthesis; L-leucine from 3-methyl-2-oxobutanoate: step 2/4. Functionally, catalyzes the isomerization between 2-isopropylmalate and 3-isopropylmalate, via the formation of 2-isopropylmaleate. The protein is 3-isopropylmalate dehydratase large subunit 1 of Pyrococcus abyssi (strain GE5 / Orsay).